The chain runs to 81 residues: Pyruvate synthase subunit PorD (81 aa).

Residues 1–20 (MESLGATVKEPGSTRKNKTG) form a disordered region. 2 4Fe-4S ferredoxin-type domains span residues 25–54 (FKPF…KEHE) and 51–80 (KEHE…MERE). [4Fe-4S] cluster is bound by residues Cys34, Cys37, Cys40, Cys44, Cys60, Cys63, Cys66, and Cys70.

Heterotetramer of one alpha, one beta, one delta and one gamma chain. [4Fe-4S] cluster serves as cofactor.

The protein is Pyruvate synthase subunit PorD (porD) of Methanothermobacter marburgensis (strain ATCC BAA-927 / DSM 2133 / JCM 14651 / NBRC 100331 / OCM 82 / Marburg) (Methanobacterium thermoautotrophicum).